The primary structure comprises 380 residues: G-protein coupled receptor (380 aa).

The next 7 membrane-spanning stretches (helical) occupy residues 26–46 (VISI…YLGI), 60–80 (LVCC…PLWV), 97–117 (FAGM…VIVT), 145–165 (VTIL…ETSI), 184–204 (AALG…HIIL), 220–240 (ILMW…SLSA), and 275–295 (VAML…VPLI). Residues C95 and C170 are joined by a disulfide bond. Positions 328-380 (SQSKLLRGEENPNYDYSPKSVRIKPLKSPGGGDNSSLKDEGYDEESQNGFSIG) are disordered.

The protein belongs to the G-protein coupled receptor 1 family.

It is found in the host membrane. This is G-protein coupled receptor from Elephas maximus (Indian elephant).